The sequence spans 682 residues: MASVALLRSFRRREVQMASVSAFKSVSANGKNSMFGKLGYLARPFCSRPVGNDVIGIDLGTTNSCVSVMEGKTARVIENAEGSRTTPSVVAMNQKGELLVGTPAKRQAVTNPTNTIFGSKRLIGRRFDDPQTQKEMKMVPYKIVKAPNGDAWVEANGQKFSPSQIGANVLTKMKETAEAYLGKSINKAVVTVPAYFNDAQRQATKDAGKIAGLDVQRIINEPTAAALSYGMNNKEGVIAVFDLGGGTFDVSILEISSGVFEVKATNGDTFLGGEDFDNTLLEYLVNEFKRSDNIDLTKDNLALQRLREAAEKAKIELSSTTQTEINLPFITADASGAKHLNITLTRSKFEGLVGKLIERTRSPCQNCLKDAGVTIKEVDEVLLVGGMTRVPKVQEIVSEIFGKSPCKGVNPDEAVAMGAAIQGGILRGDVKDLLLLDVVPLSLGIETLGAVFTKLIPRNTTIPTKKSQVFSTAADNQMQVGIKVLQGEREMAADNKVLGEFDLVGIPPAPRGMPQIEVTFDIDANGITTVSAKDKATGKEQNITIRSSGGLSDDEINRMVKEAELNAQKDQEKKQLIDLRNSADTTIYSVEKSLSEYREKIPAEIASEIETAVSDLRTAMAGEDVEDIKAKVEAANKAVSKIGEHMSKGSGSSGSDGSSGEGTSGTEQTPEAEFEEASGSRK.

The N-terminal 46 residues, 1–46 (MASVALLRSFRRREVQMASVSAFKSVSANGKNSMFGKLGYLARPFC), are a transit peptide targeting the mitochondrion. Positions 640–682 (SKIGEHMSKGSGSSGSDGSSGEGTSGTEQTPEAEFEEASGSRK) are disordered. Gly residues predominate over residues 651–663 (GSSGSDGSSGEGT).

This sequence belongs to the heat shock protein 70 (TC 1.A.33) family. DnaK subfamily. In terms of assembly, interacts with HSCB.

Its subcellular location is the mitochondrion. The protein localises to the cytoplasm. It localises to the cytosol. In terms of biological role, chaperone involved in the maturation of iron-sulfur [Fe-S] cluster-containing proteins. Has a low intrinsic ATPase activity which is markedly stimulated by HSCB and ISU1. In cooperation with other chaperones, Hsp70s are key components that facilitate folding of de novo synthesized proteins, assist translocation of precursor proteins into organelles, and are responsible for degradation of damaged protein under stress conditions. The polypeptide is Heat shock 70 kDa protein 9, mitochondrial (Arabidopsis thaliana (Mouse-ear cress)).